The following is a 324-amino-acid chain: Alkanal monooxygenase beta chain (324 aa).

The protein belongs to the bacterial luciferase oxidoreductase family. As to quaternary structure, heterodimer of an alpha and a beta chain.

It catalyses the reaction a long-chain fatty aldehyde + FMNH2 + O2 = a long-chain fatty acid + hnu + FMN + H2O + 2 H(+). Light-emitting reaction in luminous bacteria. The specific role of the beta subunit is unknown, but it is absolutely required for bioluminescence activity. This chain is Alkanal monooxygenase beta chain (luxB), found in Vibrio harveyi (Beneckea harveyi).